A 249-amino-acid chain; its full sequence is Probable transcriptional regulatory protein Sare_1779 (249 aa).

This sequence belongs to the TACO1 family.

It localises to the cytoplasm. The protein is Probable transcriptional regulatory protein Sare_1779 of Salinispora arenicola (strain CNS-205).